A 711-amino-acid polypeptide reads, in one-letter code: 1,4-alpha-glucan branching enzyme GlgB (711 aa).

The Nucleophile role is filled by Asp392. Catalysis depends on Glu443, which acts as the Proton donor.

The protein belongs to the glycosyl hydrolase 13 family. GlgB subfamily. Monomer.

It carries out the reaction Transfers a segment of a (1-&gt;4)-alpha-D-glucan chain to a primary hydroxy group in a similar glucan chain.. It participates in glycan biosynthesis; glycogen biosynthesis. Functionally, catalyzes the formation of the alpha-1,6-glucosidic linkages in glycogen by scission of a 1,4-alpha-linked oligosaccharide from growing alpha-1,4-glucan chains and the subsequent attachment of the oligosaccharide to the alpha-1,6 position. This is 1,4-alpha-glucan branching enzyme GlgB from Corynebacterium jeikeium (strain K411).